We begin with the raw amino-acid sequence, 491 residues long: Acetyl-coenzyme A carboxylase carboxyl transferase subunit beta (491 aa).

The CoA carboxyltransferase N-terminal domain occupies 132 to 491; sequence LWNQCENCFI…ISELLNLHAL (360 aa). Residues Cys-136, Cys-139, Cys-155, and Cys-158 each contribute to the Zn(2+) site. Residues 136–158 form a C4-type zinc finger; it reads CENCFIPNYKKVLKSNMQICEEC. Over residues 252-262 the composition is skewed to basic and acidic residues; the sequence is EKVEEWTKPDL. Disordered stretches follow at residues 252-273 and 279-298; these read EKVE…DEER and DKGE…EDDD. A compositionally biased stretch (acidic residues) spans 284–298; that stretch reads SQEIEDSEANDEDDD.

It belongs to the AccD/PCCB family. Acetyl-CoA carboxylase is a heterohexamer composed of biotin carboxyl carrier protein, biotin carboxylase and 2 subunits each of ACCase subunit alpha and ACCase plastid-coded subunit beta (accD). Zn(2+) is required as a cofactor.

It is found in the plastid. The enzyme catalyses N(6)-carboxybiotinyl-L-lysyl-[protein] + acetyl-CoA = N(6)-biotinyl-L-lysyl-[protein] + malonyl-CoA. The protein operates within lipid metabolism; malonyl-CoA biosynthesis; malonyl-CoA from acetyl-CoA: step 1/1. Functionally, component of the acetyl coenzyme A carboxylase (ACC) complex. Biotin carboxylase (BC) catalyzes the carboxylation of biotin on its carrier protein (BCCP) and then the CO(2) group is transferred by the transcarboxylase to acetyl-CoA to form malonyl-CoA. This is Acetyl-coenzyme A carboxylase carboxyl transferase subunit beta from Cuscuta gronovii (Common dodder).